We begin with the raw amino-acid sequence, 751 residues long: Kelch-like protein 1 (751 aa).

2 stretches are compositionally biased toward low complexity: residues 25-36 and 74-90; these read PSPASSSPAGGS and SSSSSSSSSSSSSASSS. 3 disordered regions span residues 25–54, 69–98, and 157–184; these read PSPASSSPAGGSCLQQDSGGGSFEHWGPSQ, FWKKPSSSSSSSSSSSSSASSSPFNPLNGT, and SSIQATGEGCGHRLTSTNHSLTPQSDLD. Residues 170–184 show a composition bias toward polar residues; that stretch reads LTSTNHSLTPQSDLD. The 68-residue stretch at 215 to 282 folds into the BTB domain; it reads CDVILIVGNR…AYTGCLELKE (68 aa). Kelch repeat units lie at residues 463-509, 510-556, 558-603, 604-650, 652-703, and 704-750; these read TLYA…VIDD, KLFV…VLEG, IYAV…ALNG, KLYS…TCDG, LYAV…LLGD, and RLYA…VIKQ.

As to expression, highly expressed in brain.

The protein resides in the cytoplasm. It is found in the cytoskeleton. Its function is as follows. May play a role in organizing the actin cytoskeleton of the brain cells. This chain is Kelch-like protein 1 (Klhl1), found in Mus musculus (Mouse).